Consider the following 195-residue polypeptide: Imidazoleglycerol-phosphate dehydratase (195 aa).

Belongs to the imidazoleglycerol-phosphate dehydratase family.

It localises to the cytoplasm. The enzyme catalyses D-erythro-1-(imidazol-4-yl)glycerol 3-phosphate = 3-(imidazol-4-yl)-2-oxopropyl phosphate + H2O. It functions in the pathway amino-acid biosynthesis; L-histidine biosynthesis; L-histidine from 5-phospho-alpha-D-ribose 1-diphosphate: step 6/9. The chain is Imidazoleglycerol-phosphate dehydratase from Azoarcus sp. (strain BH72).